We begin with the raw amino-acid sequence, 147 residues long: Large ribosomal subunit protein bL9 (147 aa).

It belongs to the bacterial ribosomal protein bL9 family.

Its function is as follows. Binds to the 23S rRNA. This chain is Large ribosomal subunit protein bL9, found in Natranaerobius thermophilus (strain ATCC BAA-1301 / DSM 18059 / JW/NM-WN-LF).